We begin with the raw amino-acid sequence, 125 residues long: Small ribosomal subunit protein uS13 (125 aa).

A disordered region spans residues 92–125 (RRSLPARGQNTQTNARTRKGRRKTVAGKKKAVKK). Residues 107-125 (RTRKGRRKTVAGKKKAVKK) show a composition bias toward basic residues.

The protein belongs to the universal ribosomal protein uS13 family. In terms of assembly, part of the 30S ribosomal subunit. Forms a loose heterodimer with protein S19. Forms two bridges to the 50S subunit in the 70S ribosome.

In terms of biological role, located at the top of the head of the 30S subunit, it contacts several helices of the 16S rRNA. In the 70S ribosome it contacts the 23S rRNA (bridge B1a) and protein L5 of the 50S subunit (bridge B1b), connecting the 2 subunits; these bridges are implicated in subunit movement. Contacts the tRNAs in the A and P-sites. In Chlorobium phaeobacteroides (strain BS1), this protein is Small ribosomal subunit protein uS13.